The primary structure comprises 410 residues: Multifunctional CCA protein (410 aa).

2 residues coordinate ATP: Gly8 and Arg11. CTP contacts are provided by Gly8 and Arg11. Mg(2+) is bound by residues Asp21 and Asp23. 3 residues coordinate ATP: Arg91, Arg138, and Arg141. CTP-binding residues include Arg91, Arg138, and Arg141. The region spanning 229–347 (TGIHQEMVSD…AQLALVCEAD (119 aa)) is the HD domain.

It belongs to the tRNA nucleotidyltransferase/poly(A) polymerase family. Bacterial CCA-adding enzyme type 1 subfamily. In terms of assembly, monomer. Can also form homodimers and oligomers. Requires Mg(2+) as cofactor. The cofactor is Ni(2+).

The catalysed reaction is a tRNA precursor + 2 CTP + ATP = a tRNA with a 3' CCA end + 3 diphosphate. The enzyme catalyses a tRNA with a 3' CCA end + 2 CTP + ATP = a tRNA with a 3' CCACCA end + 3 diphosphate. In terms of biological role, catalyzes the addition and repair of the essential 3'-terminal CCA sequence in tRNAs without using a nucleic acid template. Adds these three nucleotides in the order of C, C, and A to the tRNA nucleotide-73, using CTP and ATP as substrates and producing inorganic pyrophosphate. tRNA 3'-terminal CCA addition is required both for tRNA processing and repair. Also involved in tRNA surveillance by mediating tandem CCA addition to generate a CCACCA at the 3' terminus of unstable tRNAs. While stable tRNAs receive only 3'-terminal CCA, unstable tRNAs are marked with CCACCA and rapidly degraded. In Xanthomonas euvesicatoria pv. vesicatoria (strain 85-10) (Xanthomonas campestris pv. vesicatoria), this protein is Multifunctional CCA protein.